The sequence spans 1347 residues: Protocadherin-11 X-linked (1347 aa).

The first 23 residues, 1 to 23 (MDLLSGTYIFAVLLACVVFHSGA), serve as a signal peptide directing secretion. The Extracellular portion of the chain corresponds to 24-812 (QEKNYTIREE…VSSPTSDYVK (789 aa)). 7 consecutive Cadherin domains span residues 26–139 (KNYT…APLF), 140–249 (PATV…HPVF), 250–355 (KETE…VPSI), 362–466 (NPIN…APVF), 467–570 (TQSF…SPVF), 571–673 (THNE…KPVF), and 677–795 (PSNY…APVT). N-linked (GlcNAc...) asparagine glycosylation is found at asparagine 27, asparagine 48, and asparagine 54. An N-linked (GlcNAc...) asparagine glycan is attached at asparagine 344. Residue asparagine 553 is glycosylated (N-linked (GlcNAc...) asparagine). N-linked (GlcNAc...) asparagine glycosylation is present at asparagine 773. Residues 813–833 (ILVAAVAGTVTVVVVIFITAV) traverse the membrane as a helical segment. At 834–1347 (VRCRQAPHLK…DSPIMEEHPL (514 aa)) the chain is on the cytoplasmic side. 4 disordered regions span residues 1031–1050 (IWIH…GKSQ), 1057–1091 (LPEG…GYPQ), 1097–1116 (RATP…ESTF), and 1325–1347 (TFTP…EHPL).

The protein localises to the cell membrane. Potential calcium-dependent cell-adhesion protein. The polypeptide is Protocadherin-11 X-linked (PCDH11X) (Pongo pygmaeus (Bornean orangutan)).